The chain runs to 411 residues: MTAHKIVMLVLDGIGDRPCGELAGMTPLQAAKTPILDQLAAEGITGIMDTIGPGIRPGSDTSHLSLLGYPPESYYTGRGPLEAEGCGIHMEHGMIGFRANFATQNDHGLVTDRRAGRIHDTRLLSAAITDQVDLSAFGVTFSFASGAGHRAALALSGEGLGAGVTSNDPKEDGVAPHQVMPVSANPEDQKTAAVCNEFIRQSTAILADHPMNRARVLNGESPASVVLIRGAGEMGGFEPFQQRYDLSGAVIAAATLVTGIGKAVGLEYIPVEGVTGSTTTNLTGKVQTLMATLDTHDFVLLNIKGADEAGHDGHAIEKRDFIERIDAALALLLERNDCIIAVMGDHSTPCPIKEHSADPVPVLIRGDGVRVDLVQAYDEIACAAGGLNRIRGADILWILLDLIDKTHKYGT.

It belongs to the BPG-independent phosphoglycerate mutase family. A-PGAM subfamily.

It carries out the reaction (2R)-2-phosphoglycerate = (2R)-3-phosphoglycerate. The protein operates within carbohydrate degradation; glycolysis; pyruvate from D-glyceraldehyde 3-phosphate: step 3/5. Its function is as follows. Catalyzes the interconversion of 2-phosphoglycerate and 3-phosphoglycerate. This chain is 2,3-bisphosphoglycerate-independent phosphoglycerate mutase, found in Methanosphaerula palustris (strain ATCC BAA-1556 / DSM 19958 / E1-9c).